The following is a 532-amino-acid chain: Probable G-protein coupled receptor Mth-like 11 (532 aa).

Residues 1-20 form the signal peptide; that stretch reads MGMFRVEYLLLGILVIGVRS. Topologically, residues 21–229 are extracellular; it reads RDIPNCDFFD…VRKSRLSNAS (209 aa). 5 disulfides stabilise this stretch: Cys-26–Cys-80, Cys-82–Cys-87, Cys-91–Cys-184, Cys-92–Cys-103, and Cys-145–Cys-204. An N-linked (GlcNAc...) asparagine glycan is attached at Asn-42. Residues Asn-110, Asn-123, Asn-166, Asn-195, and Asn-227 are each glycosylated (N-linked (GlcNAc...) asparagine). The helical transmembrane segment at 230–250 threads the bilayer; the sequence is IPVKFSSVFFMVITIAAYLWL. The Cytoplasmic portion of the chain corresponds to 251-262; that stretch reads PKFRSLHGKCCN. The helical transmembrane segment at 263-283 threads the bilayer; the sequence is LYFICLAITFLLNVISLFGIF. Residues 284–290 are Extracellular-facing; the sequence is ELKTPIC. The helical transmembrane segment at 291-311 threads the bilayer; it reads YLTGYAGYFTVMATFLWLSVI. Residues 312–339 lie on the Cytoplasmic side of the membrane; the sequence is SFDVWRRFAMRKFQVFYKNKRSSFFNYN. A helical transmembrane segment spans residues 340–360; that stretch reads IIVWSSAGLLTCIIFLVDQFV. Residues 361-386 lie on the Extracellular side of the membrane; that stretch reads ETNLDNPYNPAVGVFSCWIFTNGWSA. The helical transmembrane segment at 387–407 threads the bilayer; that stretch reads TFYFYAPLAILIILNCASFFL. Topologically, residues 408 to 439 are cytoplasmic; that stretch reads TTRYIYVENKQNQKVLNNSEPQKLSRNHANYR. A helical transmembrane segment spans residues 440–460; that stretch reads IYFRLFIIMGGSWFLEIIAFI. At 461 to 469 the chain is on the extracellular side; it reads CEMENMWKP. Residues 470–490 traverse the membrane as a helical segment; sequence LIILNDYINCSQGIIIFVATF. The Cytoplasmic portion of the chain corresponds to 491–532; the sequence is CNHEMFRLIRKRIQNRNITSLELTNTSRPVESEKMADVELGK.

This sequence belongs to the G-protein coupled receptor 2 family. Mth subfamily.

The protein resides in the cell membrane. In Drosophila melanogaster (Fruit fly), this protein is Probable G-protein coupled receptor Mth-like 11 (mthl11).